A 127-amino-acid chain; its full sequence is Auxin-responsive protein SAUR76 (127 aa).

Residues 20–40 are disordered; it reads SFNTKPNQPPAQTNHSRSSAV.

It belongs to the ARG7 family. In terms of tissue distribution, expressed in cotyledons, hypocotyls and roots of young seedlings. Expressed in emerging lateral root, leaves, flowers, stamens and filaments.

The protein resides in the nucleus. It localises to the cytoplasm. Its subcellular location is the cell membrane. In terms of biological role, may be involved in the regulation of ethylene receptor signaling. Promotes cell expansion and plant growth. Involved in the regulation of cell elongation. The sequence is that of Auxin-responsive protein SAUR76 from Arabidopsis thaliana (Mouse-ear cress).